The following is a 166-amino-acid chain: uncharacterized protein (166 aa).

This is an uncharacterized protein from Xestia (XnGV).